The sequence spans 134 residues: MKLTQGCFSFLPDLTDDQIYKQVQYCLAKGWAVNIEFTDDPHPRNTYWEMWGLPMFDLQDAAGVMMELAECRRVYGDRYIRISGFDSSPGWESVRISFLVNRPPQEAEFELVRQEVGGRAIRYTTVRKAPAHVS.

Belongs to the RuBisCO small chain family. Heterohexadecamer of 8 large and 8 small subunits.

Functionally, ruBisCO catalyzes two reactions: the carboxylation of D-ribulose 1,5-bisphosphate, the primary event in carbon dioxide fixation, as well as the oxidative fragmentation of the pentose substrate. Both reactions occur simultaneously and in competition at the same active site. Although the small subunit is not catalytic it is essential for maximal activity. In Bradyrhizobium diazoefficiens (strain JCM 10833 / BCRC 13528 / IAM 13628 / NBRC 14792 / USDA 110), this protein is Ribulose bisphosphate carboxylase small subunit.